A 93-amino-acid chain; its full sequence is Small ribosomal subunit protein uS19 (93 aa).

The disordered stretch occupies residues 73–93; that stretch reads EFSPTRTYRGHDKKDKKIQKK.

The protein belongs to the universal ribosomal protein uS19 family.

Its function is as follows. Protein S19 forms a complex with S13 that binds strongly to the 16S ribosomal RNA. This chain is Small ribosomal subunit protein uS19, found in Phytoplasma mali (strain AT).